The following is a 149-amino-acid chain: Large ribosomal subunit protein uL13 (149 aa).

This sequence belongs to the universal ribosomal protein uL13 family. As to quaternary structure, part of the 50S ribosomal subunit.

In terms of biological role, this protein is one of the early assembly proteins of the 50S ribosomal subunit, although it is not seen to bind rRNA by itself. It is important during the early stages of 50S assembly. The polypeptide is Large ribosomal subunit protein uL13 (Chlorobium limicola (strain DSM 245 / NBRC 103803 / 6330)).